The primary structure comprises 523 residues: Polypyrimidine tract-binding protein 3 (523 aa).

Residues 1 to 25 are disordered; it reads MNSSTSAGVYANGNDNKKFKGDRPP. 3 consecutive RRM domains span residues 30 to 114, 153 to 229, and 329 to 403; these read RVLH…NLPN, LRII…FSKL, and SVLL…LSKH. A Glycyl lysine isopeptide (Lys-Gly) (interchain with G-Cter in SUMO2) cross-link involves residue Lys-36. Residue Tyr-98 is modified to Phosphotyrosine. Thr-109 is modified (phosphothreonine). Residue Lys-187 forms a Glycyl lysine isopeptide (Lys-Gly) (interchain with G-Cter in SUMO2) linkage. Position 394 is an N6-acetyllysine (Lys-394). The segment at 406-426 is disordered; the sequence is VQLPREGQEDQGLTKDFSNSP. Ser-425 carries the post-translational modification Phosphoserine. The 76-residue stretch at 446–521 folds into the RRM 4 domain; that stretch reads ATLHLSNIPP…HHLRVSFSKS (76 aa).

As to quaternary structure, interacts with THBS4 (via the acidic amphipathic C-terminus).

In terms of biological role, RNA-binding protein that mediates pre-mRNA alternative splicing regulation. Plays a role in the regulation of cell proliferation, differentiation and migration. Positive regulator of EPO-dependent erythropoiesis. Participates in cell differentiation regulation by repressing tissue-specific exons. Promotes Fas exon 6 skipping. Binds RNA, preferentially to both poly(G) and poly(U). The protein is Polypyrimidine tract-binding protein 3 (Ptbp3) of Mus musculus (Mouse).